A 338-amino-acid polypeptide reads, in one-letter code: DNA-directed RNA polymerase subunit alpha (338 aa).

The segment at 1–226 is alpha N-terminal domain (alpha-NTD); that stretch reads MLIAQRPTLT…ELFGLARELN (226 aa). The tract at residues 243–338 is alpha C-terminal domain (alpha-CTD); the sequence is LAADLALPIE…DADYADEQYN (96 aa).

Belongs to the RNA polymerase alpha chain family. In terms of assembly, homodimer. The RNAP catalytic core consists of 2 alpha, 1 beta, 1 beta' and 1 omega subunit. When a sigma factor is associated with the core the holoenzyme is formed, which can initiate transcription.

It carries out the reaction RNA(n) + a ribonucleoside 5'-triphosphate = RNA(n+1) + diphosphate. Functionally, DNA-dependent RNA polymerase catalyzes the transcription of DNA into RNA using the four ribonucleoside triphosphates as substrates. This is DNA-directed RNA polymerase subunit alpha from Beutenbergia cavernae (strain ATCC BAA-8 / DSM 12333 / CCUG 43141 / JCM 11478 / NBRC 16432 / NCIMB 13614 / HKI 0122).